The primary structure comprises 279 residues: Large ribosomal subunit protein uL2 (279 aa).

The tract at residues 223–279 is disordered; that stretch reads VAMNPIDHPHGGGEGRTSGGRHPVTPWGKGTKGTRTRSNKSTDKYILRSRHAKKKGR. Residues 269 to 279 are compositionally biased toward basic residues; sequence LRSRHAKKKGR.

Belongs to the universal ribosomal protein uL2 family. As to quaternary structure, part of the 50S ribosomal subunit. Forms a bridge to the 30S subunit in the 70S ribosome.

Functionally, one of the primary rRNA binding proteins. Required for association of the 30S and 50S subunits to form the 70S ribosome, for tRNA binding and peptide bond formation. It has been suggested to have peptidyltransferase activity; this is somewhat controversial. Makes several contacts with the 16S rRNA in the 70S ribosome. The chain is Large ribosomal subunit protein uL2 from Paracoccus denitrificans (strain Pd 1222).